A 125-amino-acid chain; its full sequence is Oxytocin-neurophysin 1 (125 aa).

A signal peptide spans 1–19 (MACPSLACCLLGLLALTSA). C20 and C25 are joined by a disulfide. A Glycine amide modification is found at G28. Cystine bridges form between C41-C85, C44-C58, C52-C75, C59-C65, C92-C104, C98-C116, and C105-C110.

The protein belongs to the vasopressin/oxytocin family. As to quaternary structure, interacts with oxytocin receptor (Ki=1.5 nM). Interacts with vasopressin V1aR/AVPR1A (Ki=37 nM), V1bR/AVPR1B (Ki=222 nM), and V2R/AVPR2 receptors (Ki=823 nM).

Neurophysin 1 specifically binds oxytocin. Its function is as follows. Oxytocin causes contraction of the smooth muscle of the uterus and of the mammary gland. Acts by binding to oxytocin receptor (OXTR). This chain is Oxytocin-neurophysin 1 (Oxt), found in Rattus norvegicus (Rat).